We begin with the raw amino-acid sequence, 210 residues long: Small ribosomal subunit protein uS4 (210 aa).

The interval 30-49 (EKSSLEKRKYPPGLPPKKKG) is disordered. One can recognise an S4 RNA-binding domain in the interval 99 to 162 (RRLDNVLYRM…QKSAFIEENI (64 aa)).

The protein belongs to the universal ribosomal protein uS4 family. As to quaternary structure, part of the 30S ribosomal subunit. Contacts protein S5. The interaction surface between S4 and S5 is involved in control of translational fidelity.

One of the primary rRNA binding proteins, it binds directly to 16S rRNA where it nucleates assembly of the body of the 30S subunit. In terms of biological role, with S5 and S12 plays an important role in translational accuracy. The sequence is that of Small ribosomal subunit protein uS4 from Leptospira biflexa serovar Patoc (strain Patoc 1 / Ames).